Consider the following 419-residue polypeptide: ATP-dependent RNA helicase RhlB (419 aa).

The short motif at 9 to 37 (QRFSDLALHRSVQQAIKEKGFEFCTPIQA) is the Q motif element. The Helicase ATP-binding domain maps to 40–217 (LPITLKGQDI…FEHMNDPQYV (178 aa)). ATP is bound at residue 53–60 (AQTGTGKT). A DEAD box motif is present at residues 163–166 (DEAD). The Helicase C-terminal domain occupies 241–388 (KMALLMTLLE…VSQYDAKALI (148 aa)).

This sequence belongs to the DEAD box helicase family. RhlB subfamily. As to quaternary structure, component of the RNA degradosome, which is a multiprotein complex involved in RNA processing and mRNA degradation.

The protein resides in the cytoplasm. The enzyme catalyses ATP + H2O = ADP + phosphate + H(+). In terms of biological role, DEAD-box RNA helicase involved in RNA degradation. Has RNA-dependent ATPase activity and unwinds double-stranded RNA. In Histophilus somni (strain 129Pt) (Haemophilus somnus), this protein is ATP-dependent RNA helicase RhlB.